Reading from the N-terminus, the 152-residue chain is Protein-export protein SecB (152 aa).

The protein belongs to the SecB family. As to quaternary structure, homotetramer, a dimer of dimers. One homotetramer interacts with 1 SecA dimer.

Its subcellular location is the cytoplasm. One of the proteins required for the normal export of preproteins out of the cell cytoplasm. It is a molecular chaperone that binds to a subset of precursor proteins, maintaining them in a translocation-competent state. It also specifically binds to its receptor SecA. The chain is Protein-export protein SecB from Thiobacillus denitrificans (strain ATCC 25259 / T1).